Consider the following 376-residue polypeptide: 23S rRNA (uracil(747)-C(5))-methyltransferase RlmC (376 aa).

[4Fe-4S] cluster is bound by residues Cys-3, Cys-11, Cys-14, and Cys-87. S-adenosyl-L-methionine-binding residues include Gln-212, Phe-241, Glu-262, and Asn-307. Catalysis depends on Cys-334, which acts as the Nucleophile.

Belongs to the class I-like SAM-binding methyltransferase superfamily. RNA M5U methyltransferase family. RlmC subfamily.

The enzyme catalyses uridine(747) in 23S rRNA + S-adenosyl-L-methionine = 5-methyluridine(747) in 23S rRNA + S-adenosyl-L-homocysteine + H(+). In terms of biological role, catalyzes the formation of 5-methyl-uridine at position 747 (m5U747) in 23S rRNA. This chain is 23S rRNA (uracil(747)-C(5))-methyltransferase RlmC, found in Salmonella typhimurium (strain LT2 / SGSC1412 / ATCC 700720).